A 141-amino-acid chain; its full sequence is Small ribosomal subunit protein bS18c (141 aa).

2 disordered regions span residues 14-55 (EFIA…IKPG) and 120-141 (IKRRESTARKKRKKGFRKRPKK). The segment covering 24 to 34 (PKAPLQPPLPP) has biased composition (pro residues). Positions 35–51 (SKRKGKPPKSPRRRSSR) are enriched in basic residues.

This sequence belongs to the bacterial ribosomal protein bS18 family. Part of the 30S ribosomal subunit.

It localises to the plastid. It is found in the chloroplast. This is Small ribosomal subunit protein bS18c from Pelargonium hortorum (Common geranium).